The sequence spans 544 residues: Chaperonin GroEL 1 (544 aa).

ATP-binding positions include 30–33 (TLGP), Lys-51, 87–91 (DGTTT), Gly-415, 481–483 (DAL), and Asp-497.

It belongs to the chaperonin (HSP60) family. As to quaternary structure, forms a cylinder of 14 subunits composed of two heptameric rings stacked back-to-back. Interacts with the co-chaperonin GroES.

It localises to the cytoplasm. It catalyses the reaction ATP + H2O + a folded polypeptide = ADP + phosphate + an unfolded polypeptide.. Together with its co-chaperonin GroES, plays an essential role in assisting protein folding. The GroEL-GroES system forms a nano-cage that allows encapsulation of the non-native substrate proteins and provides a physical environment optimized to promote and accelerate protein folding. The sequence is that of Chaperonin GroEL 1 from Chlamydia caviae (strain ATCC VR-813 / DSM 19441 / 03DC25 / GPIC) (Chlamydophila caviae).